We begin with the raw amino-acid sequence, 106 residues long: Iron-sulfur cluster assembly protein CyaY (106 aa).

Belongs to the frataxin family.

Involved in iron-sulfur (Fe-S) cluster assembly. May act as a regulator of Fe-S biogenesis. This Escherichia coli O7:K1 (strain IAI39 / ExPEC) protein is Iron-sulfur cluster assembly protein CyaY.